The sequence spans 831 residues: Vi polysaccharide biosynthesis protein TviD (831 aa).

It functions in the pathway glycan metabolism; Vi-antigen biosynthesis. Its pathway is capsule biogenesis; capsule polysaccharide biosynthesis. Functionally, may be required for maturation of the Vi polysaccharide. The protein is Vi polysaccharide biosynthesis protein TviD (tviD) of Salmonella typhi.